Consider the following 347-residue polypeptide: Probable ribonucleotide transport ATP-binding protein mkl (347 aa).

Residues 16-252 (IEVKGLTKSF…DEPVVRQFLN (237 aa)) form the ABC transporter domain. 48–55 (GPSGTGKS) is a binding site for ATP.

It belongs to the ABC transporter superfamily.

Functionally, not known, could be involved in the transport of ribonucleotides. The sequence is that of Probable ribonucleotide transport ATP-binding protein mkl (mkl) from Mycobacterium leprae (strain TN).